A 173-amino-acid polypeptide reads, in one-letter code: Photosystem I assembly protein Ycf3 (173 aa).

3 TPR repeats span residues 35–68 (AFAY…EEDP), 72–105 (AFIL…NAKM), and 120–153 (GSIA…APNN).

It belongs to the Ycf3 family.

The protein resides in the cellular thylakoid membrane. In terms of biological role, essential for the assembly of the photosystem I (PSI) complex. May act as a chaperone-like factor to guide the assembly of the PSI subunits. The sequence is that of Photosystem I assembly protein Ycf3 from Synechococcus sp. (strain RCC307).